The chain runs to 1237 residues: U3 small nucleolar RNA-associated protein 22 (1237 aa).

The tract at residues 1–78 is disordered; the sequence is MATSVKRKAS…TNTAATRHNG (78 aa). Phosphoserine is present on residues Ser10 and Ser58. Thr60 is modified (phosphothreonine). Residues 61–78 show a composition bias toward polar residues; it reads SPESNEVATNTAATRHNG. Ser64 bears the Phosphoserine mark.

The protein belongs to the NRAP family. In terms of assembly, interacts with snoRNA U3. Interacts with MPP10. Component of the ribosomal small subunit (SSU) processome composed of at least 40 protein subunits and snoRNA U3. Interacts with UBP10.

It localises to the nucleus. Its subcellular location is the nucleolus. Involved in nucleolar processing of pre-18S ribosomal RNA and ribosome assembly. The sequence is that of U3 small nucleolar RNA-associated protein 22 (UTP22) from Saccharomyces cerevisiae (strain ATCC 204508 / S288c) (Baker's yeast).